A 146-amino-acid chain; its full sequence is Large ribosomal subunit protein uL15 (146 aa).

Residues 1 to 18 (MKLHELKPSEGSRKERNR) show a composition bias toward basic and acidic residues. The tract at residues 1–50 (MKLHELKPSEGSRKERNRVGRGTGSGNGKTSGRGHKGQKARSGGGVRLGF) is disordered. Over residues 21-31 (RGTGSGNGKTS) the composition is skewed to gly residues.

It belongs to the universal ribosomal protein uL15 family. As to quaternary structure, part of the 50S ribosomal subunit.

In terms of biological role, binds to the 23S rRNA. The protein is Large ribosomal subunit protein uL15 of Listeria innocua serovar 6a (strain ATCC BAA-680 / CLIP 11262).